A 342-amino-acid polypeptide reads, in one-letter code: Pyridoxal 4-dehydrogenase (342 aa).

Residue Asp56 is part of the active site. Tyr61 acts as the Proton donor in catalysis. Lys86 is an active-site residue. An NADP(+)-binding site is contributed by 245–255 (GVFNSGILAAP).

This sequence belongs to the aldo/keto reductase family. In terms of assembly, homodimer.

It catalyses the reaction pyridoxal + NAD(+) = 4-pyridoxolactone + NADH + H(+). Its pathway is cofactor degradation; B6 vitamer degradation; 4-pyridoxate from pyridoxal: step 1/2. The chain is Pyridoxal 4-dehydrogenase (pld1) from Microbacterium luteolum (Aureobacterium luteolum).